Here is a 352-residue protein sequence, read N- to C-terminus: Ubiquitin thioesterase otulin (352 aa).

Residues 1 to 48 form a disordered region; sequence MSRGTMPQPEAWPGASCAETPAREAAATARDGGKAAASGQPRPEMQCP. The segment covering 18–37 has biased composition (low complexity); it reads AETPAREAAATARDGGKAAA. A PIM motif motif is present at residues 52-57; the sequence is EEDMYR. A Phosphotyrosine modification is found at Y56. Linear diubiquitin binding regions lie at residues 95–96 and 124–126; these read EW and RGD. The OTU domain occupies 118–346; that stretch reads TSIRRVRGDN…DRHYNIPVRV (229 aa). D126 is a catalytic residue. Residue C129 is the Nucleophile of the active site. 3 linear diubiquitin binding regions span residues 255 to 259, 283 to 289, and 336 to 338; these read FFSVL, TGGLEQV, and DDR. The active site involves H339.

It belongs to the peptidase C65 family. Otulin subfamily. As to quaternary structure, interacts (via the PUB domain) with RNF31 (via the PIM motif); the interaction is direct. Interacts with DVL2. In terms of processing, ubiquitinated. Post-translationally, acetylated. Phosphorylated. Phosphorylation at Tyr-56 prevents interaction with RNF31; dephosphorylation promotes interaction with RNF31 and the LUBAC complex.

The protein localises to the cytoplasm. The catalysed reaction is Thiol-dependent hydrolysis of ester, thioester, amide, peptide and isopeptide bonds formed by the C-terminal Gly of ubiquitin (a 76-residue protein attached to proteins as an intracellular targeting signal).. In terms of biological role, deubiquitinase that specifically removes linear ('Met-1'-linked) polyubiquitin chains to substrates and acts as a regulator of angiogenesis and innate immune response. Required during angiogenesis, craniofacial and neuronal development by regulating the canonical Wnt signaling together with the LUBAC complex. Acts as a negative regulator of NF-kappa-B by regulating the activity of the LUBAC complex. OTULIN function is mainly restricted to homeostasis of the LUBAC complex: acts by removing 'Met-1'-linked autoubiquitination of the LUBAC complex, thereby preventing inactivation of the LUBAC complex. Acts as a key negative regulator of inflammation by restricting spontaneous inflammation and maintaining immune homeostasis. In myeloid cell, required to prevent unwarranted secretion of cytokines leading to inflammation and autoimmunity by restricting linear polyubiquitin formation. Plays a role in innate immune response by restricting linear polyubiquitin formation on LUBAC complex in response to NOD2 stimulation, probably to limit NOD2-dependent pro-inflammatory signaling. This chain is Ubiquitin thioesterase otulin, found in Homo sapiens (Human).